The primary structure comprises 195 residues: Imidazoleglycerol-phosphate dehydratase (195 aa).

Belongs to the imidazoleglycerol-phosphate dehydratase family.

The protein localises to the cytoplasm. The enzyme catalyses D-erythro-1-(imidazol-4-yl)glycerol 3-phosphate = 3-(imidazol-4-yl)-2-oxopropyl phosphate + H2O. Its pathway is amino-acid biosynthesis; L-histidine biosynthesis; L-histidine from 5-phospho-alpha-D-ribose 1-diphosphate: step 6/9. The protein is Imidazoleglycerol-phosphate dehydratase of Leuconostoc mesenteroides subsp. mesenteroides (strain ATCC 8293 / DSM 20343 / BCRC 11652 / CCM 1803 / JCM 6124 / NCDO 523 / NBRC 100496 / NCIMB 8023 / NCTC 12954 / NRRL B-1118 / 37Y).